The following is a 290-amino-acid chain: 33 kDa chaperonin (290 aa).

2 disulfide bridges follow: Cys-235–Cys-237 and Cys-268–Cys-271.

Belongs to the HSP33 family. Post-translationally, under oxidizing conditions two disulfide bonds are formed involving the reactive cysteines. Under reducing conditions zinc is bound to the reactive cysteines and the protein is inactive.

The protein resides in the cytoplasm. Redox regulated molecular chaperone. Protects both thermally unfolding and oxidatively damaged proteins from irreversible aggregation. Plays an important role in the bacterial defense system toward oxidative stress. This Streptococcus pyogenes serotype M12 (strain MGAS2096) protein is 33 kDa chaperonin.